A 365-amino-acid polypeptide reads, in one-letter code: Caffeic acid 3-O-methyltransferase 1 (365 aa).

Position 130 to 136 (130 to 136) interacts with substrate; the sequence is MNQDKVL. The segment at 162 to 180 is substrate binding; it reads AFEYHGTDPRFNKVFNKGM. S-adenosyl-L-methionine-binding residues include glycine 208, aspartate 231, aspartate 251, methionine 252, and lysine 265. Histidine 269 acts as the Proton acceptor in catalysis.

The protein belongs to the class I-like SAM-binding methyltransferase superfamily. Cation-independent O-methyltransferase family. COMT subfamily. Homodimer. Post-translationally, the N-terminus is blocked. In terms of tissue distribution, xylem.

The catalysed reaction is (E)-caffeate + S-adenosyl-L-methionine = (E)-ferulate + S-adenosyl-L-homocysteine + H(+). It participates in aromatic compound metabolism; phenylpropanoid biosynthesis. Its function is as follows. Catalyzes the conversion of caffeic acid to ferulic acid and of 5-hydroxyferulic acid to sinapic acid. The resulting products may subsequently be converted to the corresponding alcohols that are incorporated into lignins. The polypeptide is Caffeic acid 3-O-methyltransferase 1 (OMT1) (Populus tremuloides (Quaking aspen)).